The primary structure comprises 787 residues: LPS-assembly protein LptD (787 aa).

The signal sequence occupies residues 1 to 39 (MPPKTLFPLVPACDAAPRKKRLAVALLAVPGLVPAVSQA).

It belongs to the LptD family. In terms of assembly, component of the lipopolysaccharide transport and assembly complex. Interacts with LptE and LptA.

The protein resides in the cell outer membrane. Functionally, together with LptE, is involved in the assembly of lipopolysaccharide (LPS) at the surface of the outer membrane. The sequence is that of LPS-assembly protein LptD from Burkholderia pseudomallei (strain 1710b).